The primary structure comprises 365 residues: MVRGARKAIAVGVAVAVACGLQKHLNFVPGPRHAAPVAAAAASMMMAPAAFADEIGDAAKKLGDASYSFAKEVDWNNGIFLQAPGKFQPLEALKAIDKMIEMGAAADPKLLKDAAEAHHKAIGSISGPNGVTSRADWDAVNAAIGRVVASVPKAKVMAVYDSVTAITDPGVPAYMKSLVNGPDAEKAYQGFLEFKDVVEKNQVATASAPAVVPSGDKIGEAAKALSDASYPFIKDIDWLSDIYLKPLPGKTAPETLKAIDKMIVMGAKMDGNLLKAAAEAHHKAIGSIDATGVTSAADYEAVNAAIGRLVASVPKTTVMDVYNSMAGVVDSSVPNNLFSKVNPLDAVAAAKGFYTFKDVVEASQR.

The transit peptide at M1–A52 directs the protein to the chloroplast. Tandem repeats lie at residues D53–G215 and D216–R365.

Monomer.

It is found in the plastid. It localises to the chloroplast. In terms of biological role, water-soluble antenna for capture of solar energy in the blue-green range. Peridinin is an asymmetric carotenoid. This is Peridinin-chlorophyll a-binding protein, chloroplastic from Symbiodinium sp. (Dinoflagellate).